An 854-amino-acid polypeptide reads, in one-letter code: DNA mismatch repair protein MutS (854 aa).

615–622 (GPNMGGKS) serves as a coordination point for ATP.

The protein belongs to the DNA mismatch repair MutS family.

This protein is involved in the repair of mismatches in DNA. It is possible that it carries out the mismatch recognition step. This protein has a weak ATPase activity. The sequence is that of DNA mismatch repair protein MutS from Aliivibrio fischeri (strain MJ11) (Vibrio fischeri).